Consider the following 98-residue polypeptide: Small ribosomal subunit protein bS6 (98 aa).

It belongs to the bacterial ribosomal protein bS6 family.

In terms of biological role, binds together with bS18 to 16S ribosomal RNA. This chain is Small ribosomal subunit protein bS6, found in Staphylococcus carnosus (strain TM300).